A 367-amino-acid chain; its full sequence is UDP-D-xylose:L-fucose alpha-1,3-D-xylosyltransferase (367 aa).

Residues 1-10 (MAQKQQTLHQ) show a composition bias toward polar residues. Positions 1–21 (MAQKQQTLHQQRPFSSSPRSY) are disordered. Topologically, residues 1–35 (MAQKQQTLHQQRPFSSSPRSYSSISNRPIFLLSRN) are cytoplasmic. A compositionally biased stretch (low complexity) spans 12 to 21 (RPFSSSPRSY). A helical; Signal-anchor for type II membrane protein membrane pass occupies residues 36 to 56 (GLLLVLLALFLLLGVFLPWPG). Over 57 to 367 (SPLLLFPNKV…ALESPLGKLQ (311 aa)) the chain is Lumenal. Residues Asn-85, Asn-98, and Asn-173 are each glycosylated (N-linked (GlcNAc...) asparagine). The DXD motif motif lies at 196–198 (DVD). N-linked (GlcNAc...) asparagine glycosylation is found at Asn-228 and Asn-292.

It belongs to the glycosyltransferase 77 family. The cofactor is Mn(2+). It depends on Mg(2+) as a cofactor. Glycosylated. As to expression, expressed in roots, rosette leaves, stems and flowers.

It localises to the golgi apparatus membrane. Catalyzes the transfer of D-xylose from UDP-alpha-D-xylose onto L-fucose. Probably involved in the biosynthesis of rhamnogalacturonan II (RG-II) through xylosylation of the internal fucose moiety of the A-chain of RG-II, a structurally complex pectic polysaccharide of the primary cell wall. RG-II is essential for the cell wall integrity of rapidly growing tissues such as roots and pollen tube growth and elongation. The chain is UDP-D-xylose:L-fucose alpha-1,3-D-xylosyltransferase from Arabidopsis thaliana (Mouse-ear cress).